The sequence spans 662 residues: UPF0313 protein CPR_1216 (662 aa).

One can recognise a Radical SAM core domain in the interval 296–567 (AIEEVKFSLV…AMQRALLQFK (272 aa)). [4Fe-4S] cluster-binding residues include Cys310, Cys314, and Cys317. Residues 597 to 662 (RDKNSFGKGN…QRVSKGKKRR (66 aa)) are disordered. The segment covering 618-632 (SRNENSGRRESEDKK) has biased composition (basic and acidic residues). A compositionally biased stretch (basic residues) spans 633–644 (RSSHSKKQRGNK).

Belongs to the UPF0313 family. [4Fe-4S] cluster is required as a cofactor.

This is UPF0313 protein CPR_1216 from Clostridium perfringens (strain SM101 / Type A).